The following is a 786-amino-acid chain: MSDLKEAIQLIDENKQFNPSTLNYFTKCLGDKNVGVKYHVISVFGSQSSGKSTLLNKLFDTKFDTMDAQVKRQQTTRGIWLSHSANIYSSGAANQSIPDFFVLDVEGSDGAERGEDQDFERKAALFALSVSEVLIVNMWENQVGLYQGNNMGLLKTVFEVNLSLFGKNENRHKVALLFVIRDFTGQTPLESLEASLVLELEKMWSQLSKPEGCEDTSFHDFFVPNFFGLGHKVFQPEQFDNDVKSLGDLFVDQDASFFKDEYHTHLPLDGWSLYAENCWEQIENNKDLDLPTQQILVARFKTDEIAAAAYNKFLNDYQSQVTDSLDGKELATVLKTLQSTCIDVDYDPFASRYAKKVYEERRDDLIKQLNTIIDETITNFVTRTTSSLIETFHKNARDRSLKGPFKLKIQSALEKASRTFKTNLAPFSELELLSSMDAYISKFEARVNTEVADLQERELNAIVARFNKGLTIKLKDTILHLLAKPTINVWDDVMKEFTSFLDGSLKKYTNEDGKIDFQTGATTDANDKTEHTLKRNAWSFLDHTVHGYLTEDNVVDIMRNVFNDKFRYDDDGMPKFWKNEAEVDASYRLAKSQALSVLDALAIVKNKDNVEILIPEALLESDGDGSDYEENGGQEEEEAGLYHQQRFSHVLSALQKDKIITKFKQFTDLVIIEAKRSIVNTTERIPLYMYALVVALGWGRIITILRNPATIILSIIVLAGAYFVHKLNLWGPLLQFANQATGQATAVLKQTVRSLVVDEEPKRKILVEPHESEGVDKEPSKNDQHL.

Residues 1 to 684 (MSDLKEAIQL…KRSIVNTTER (684 aa)) lie on the Cytoplasmic side of the membrane. One can recognise a GB1/RHD3-type G domain in the interval 35-262 (GVKYHVISVF…QDASFFKDEY (228 aa)). 45 to 52 (GSQSSGKS) is a binding site for GTP. Positions 355–375 (KKVYEERRDDLIKQLNTIIDE) form a coiled coil. A helical membrane pass occupies residues 685 to 705 (IPLYMYALVVALGWGRIITIL). Over 706 to 708 (RNP) the chain is Lumenal. The chain crosses the membrane as a helical span at residues 709–729 (ATIILSIIVLAGAYFVHKLNL). Over 730 to 786 (WGPLLQFANQATGQATAVLKQTVRSLVVDEEPKRKILVEPHESEGVDKEPSKNDQHL) the chain is Cytoplasmic. The segment at 765 to 786 (ILVEPHESEGVDKEPSKNDQHL) is disordered.

The protein belongs to the TRAFAC class dynamin-like GTPase superfamily. GB1/RHD3 GTPase family. RHD3 subfamily.

The protein resides in the endoplasmic reticulum membrane. Cooperates with the reticulon proteins and tubule-shaping DP1 family proteins to generate and maintain the structure of the tubular endoplasmic reticulum network. Has GTPase activity, which is required for its function in ER organization. The sequence is that of Protein SEY1 from Kluyveromyces lactis (strain ATCC 8585 / CBS 2359 / DSM 70799 / NBRC 1267 / NRRL Y-1140 / WM37) (Yeast).